Reading from the N-terminus, the 540-residue chain is Chaperonin GroEL (540 aa).

Residues 29–32 (TIGP), 86–90 (DGTTT), G413, 476–478 (NAA), and D492 contribute to the ATP site. Residues 520–540 (DKPEPESNNQMPATPGMGGMM) are disordered.

This sequence belongs to the chaperonin (HSP60) family. In terms of assembly, forms a cylinder of 14 subunits composed of two heptameric rings stacked back-to-back. Interacts with the co-chaperonin GroES.

Its subcellular location is the cytoplasm. The enzyme catalyses ATP + H2O + a folded polypeptide = ADP + phosphate + an unfolded polypeptide.. Functionally, together with its co-chaperonin GroES, plays an essential role in assisting protein folding. The GroEL-GroES system forms a nano-cage that allows encapsulation of the non-native substrate proteins and provides a physical environment optimized to promote and accelerate protein folding. The polypeptide is Chaperonin GroEL (Ligilactobacillus salivarius (strain UCC118) (Lactobacillus salivarius)).